The primary structure comprises 445 residues: UPF0210 protein LACR_1020 (445 aa).

Belongs to the UPF0210 family. In terms of assembly, homodimer.

In Lactococcus lactis subsp. cremoris (strain SK11), this protein is UPF0210 protein LACR_1020.